Here is a 177-residue protein sequence, read N- to C-terminus: Large ribosomal subunit protein uL6 (177 aa).

Belongs to the universal ribosomal protein uL6 family. In terms of assembly, part of the 50S ribosomal subunit.

Functionally, this protein binds to the 23S rRNA, and is important in its secondary structure. It is located near the subunit interface in the base of the L7/L12 stalk, and near the tRNA binding site of the peptidyltransferase center. This is Large ribosomal subunit protein uL6 from Acinetobacter baumannii (strain AB307-0294).